Reading from the N-terminus, the 434-residue chain is Chaperone SurA (434 aa).

Positions 1 to 22 (MKPSKHLIFALFALAISQPTMA) are cleaved as a signal peptide. PpiC domains follow at residues 173–274 (DVEY…KIMD) and 283–383 (IEEV…QLEE).

Its subcellular location is the periplasm. It carries out the reaction [protein]-peptidylproline (omega=180) = [protein]-peptidylproline (omega=0). Its function is as follows. Chaperone involved in the correct folding and assembly of outer membrane proteins. Recognizes specific patterns of aromatic residues and the orientation of their side chains, which are found more frequently in integral outer membrane proteins. May act in both early periplasmic and late outer membrane-associated steps of protein maturation. The protein is Chaperone SurA of Shewanella sp. (strain MR-7).